The following is a 315-amino-acid chain: uncharacterized protein (315 aa).

The next 3 membrane-spanning stretches (helical) occupy residues 19–39 (IGAG…GNVF), 56–76 (TVLV…LHSF), and 81–101 (PLKK…ISLI). The segment covering 154–171 (EDSASSGRTSSSVNQPIQ) has biased composition (polar residues). Positions 154–214 (EDSASSGRTS…EREARAQEHD (61 aa)) are disordered. A compositionally biased stretch (basic and acidic residues) spans 203–214 (GGEREARAQEHD).

It belongs to the ATPase C chain family.

It is found in the mitochondrion membrane. This is an uncharacterized protein from Arabidopsis thaliana (Mouse-ear cress).